An 87-amino-acid chain; its full sequence is UPF0237 protein YjhC (87 aa).

Residues 4–76 enclose the ACT domain; the sequence is VVTVVGADKI…EALGVNIHVQ (73 aa).

It belongs to the UPF0237 family.

The polypeptide is UPF0237 protein YjhC (yjhC) (Lactococcus lactis subsp. lactis (strain IL1403) (Streptococcus lactis)).